The sequence spans 145 residues: Ribosome maturation factor RimP (145 aa).

Belongs to the RimP family.

It is found in the cytoplasm. In terms of biological role, required for maturation of 30S ribosomal subunits. This chain is Ribosome maturation factor RimP, found in Azotobacter vinelandii (strain DJ / ATCC BAA-1303).